A 116-amino-acid chain; its full sequence is Large ribosomal subunit protein bL19 (116 aa).

This sequence belongs to the bacterial ribosomal protein bL19 family.

In terms of biological role, this protein is located at the 30S-50S ribosomal subunit interface and may play a role in the structure and function of the aminoacyl-tRNA binding site. This Mycoplasmopsis agalactiae (strain NCTC 10123 / CIP 59.7 / PG2) (Mycoplasma agalactiae) protein is Large ribosomal subunit protein bL19.